Reading from the N-terminus, the 802-residue chain is Protein enabled homolog (802 aa).

The WH1 domain maps to 1-111; the sequence is MSEQSICQAR…SAMMHALEVL (111 aa). Residues 143-155 show a composition bias toward polar residues; that stretch reads NSQLPAQVQNGPS. The segment at 143-166 is disordered; the sequence is NSQLPAQVQNGPSQEELEIQRRQL. S144 is modified (phosphoserine). Positions 154-258 form a coiled coil; that stretch reads PSQEELEIQR…ERERRMSNAA (105 aa). 7 consecutive repeat copies span residues 175 to 179, 180 to 184, 185 to 189, 190 to 194, 195 to 199, 200 to 204, and 205 to 209. Residues 175-209 are 7 X 5 AA tandem repeats of [LM]-E-[QR]-[EQ]-[QR]; the sequence is LERERMERERLERERLERERLERERLEQEQLERQR. The segment covering 245–254 has biased composition (basic and acidic residues); sequence QVEWERERRM. Disordered stretches follow at residues 245–287 and 341–622; these read QVEW…PSYA and ATVP…RPLT. S255 is subject to Phosphoserine; by PKA. Positions 255-278 are enriched in low complexity; that stretch reads SNAAPSSDSSLSSAPLPEYSSCQP. Polar residues predominate over residues 348–361; that stretch reads NKNSRPSSPVNTPS. The residue at position 383 (S383) is a Phosphoserine. Low complexity predominate over residues 386 to 410; the sequence is IMISSPPGKATGPRPVLPVCVSSPV. Residues 431 to 464 are compositionally biased toward pro residues; it reads VSPPPTSGPAAPPPPPPPPPPPPPPPLPPPPLPP. The span at 485–505 shows a compositional bias: low complexity; the sequence is STPSSKPSVLPSPSAGAPASA. The span at 525-535 shows a compositional bias: polar residues; sequence AASQPAESPTP. The span at 542 to 553 shows a compositional bias: pro residues; sequence PPAPPPPPPLPS. At Y557 the chain carries Phosphotyrosine. The segment covering 561–605 has biased composition (pro residues); the sequence is LPPPPGPPPPPPLPSTGPPPPPPPPPPLPNQAPPPPPPPPAPPLP. The tract at residues 623–643 is EVH2 block A; it reads GLAAAIAGAKLRKVSRVEDGS. The EVH2 stretch occupies residues 623-799; sequence GLAAAIAGAK…DAIRQELSKS (177 aa). The short motif at 632 to 635 is the KLKR element; it reads KLRK. Disordered stretches follow at residues 639–675 and 691–764; these read VEDGSFPGGGNTGSVSLASSKADAGRGNGPLPLGGSG and AEKG…TEGL. Residues 664–675 show a composition bias toward gly residues; the sequence is RGNGPLPLGGSG. The interval 674–691 is EVH2 block B; sequence SGLMEEMSALLARRRRIA. Polar residues predominate over residues 731-760; the sequence is RTNTMNGSKSPVISRPKSTPSSQPSANGVQ. 2 positions are modified to phosphoserine: S738 and S740. The interval 765–799 is EVH2 block C; sequence DYDRLKQDILDEMRKELAKLKEELIDAIRQELSKS. The stretch at 767-797 forms a coiled coil; the sequence is DRLKQDILDEMRKELAKLKEELIDAIRQELS.

It belongs to the Ena/VASP family. In terms of assembly, homotetramer. Interacts with APBB1IP, APBB1, PFN1 and ROBO4. Isoforms, containing the polyproline-rich regions with PPLP motifs, bind the WW domain of APBB1IP. Isoforms, containing the PPSY motif, bind, in vitro, to the WW2 and WW3 domains of NEDD4 and to the WW1 domain of YAP1. Binds the SH3 domain of BAIAP2-alpha but only after the autoinhibitory region of BAIAP2-alpha has been blocked by interaction with CDC42. Interacts, via the EVH1/WH1 domain, with the Pro-rich domains from VCL, ZYX and Listeria monocytogenes actA and with TES (via LIM domain). The TES LIM domain and the Pro-rich domains from VCL or ZYX compete for the same binding site. Interaction with ZYX is important for targeting ENAH to focal adhesions and enhances production of actin-rich structures at the apical surface of cells. Binds GPHN. Heterotrimer with TES and ACTL7A. Interacts with FAT1 (via EVH1 domains). Interacts, through the Pro-rich region, with the C-terminal SH3 domain of DNMPB. Interacts with PRPF40A. NTN1-induced PKA phosphorylation on Ser-255 directly parallels the formation of filopodial protrusions. In terms of tissue distribution, expressed in heart and testis, lower levels in lung, skeletal muscle, kidney, pancreas and brain. Isoform 5 is expressed exclusively in the brain. Isoform 2 is expressed predominantly in brain, testis, ovary and fat. In the brain, isoforms 2 and 5 are expressed at highest levels in the hippocampus, cortex and midbrain, and at lowest levels in the striatum and cerebellum. Isoform 6 is expressed in brain and spleen.

The protein localises to the cytoplasm. The protein resides in the cytoskeleton. Its subcellular location is the cell projection. It is found in the lamellipodium. It localises to the filopodium. The protein localises to the synapse. The protein resides in the cell junction. Its subcellular location is the focal adhesion. In terms of biological role, ena/VASP proteins are actin-associated proteins involved in a range of processes dependent on cytoskeleton remodeling and cell polarity such as axon guidance and lamellipodial and filopodial dynamics in migrating cells. ENAH induces the formation of F-actin rich outgrowths in fibroblasts. Acts synergistically with BAIAP2-alpha and downstream of NTN1 to promote filipodia formation. The sequence is that of Protein enabled homolog (Enah) from Mus musculus (Mouse).